A 148-amino-acid polypeptide reads, in one-letter code: Aspartate 1-decarboxylase (148 aa).

S25 functions as the Schiff-base intermediate with substrate; via pyruvic acid in the catalytic mechanism. S25 is subject to Pyruvic acid (Ser). Substrate is bound at residue T57. The active-site Proton donor is the Y58. A substrate-binding site is contributed by 73–75 (GAA).

The protein belongs to the PanD family. Heterooctamer of four alpha and four beta subunits. The cofactor is pyruvate. In terms of processing, is synthesized initially as an inactive proenzyme, which is activated by self-cleavage at a specific serine bond to produce a beta-subunit with a hydroxyl group at its C-terminus and an alpha-subunit with a pyruvoyl group at its N-terminus.

Its subcellular location is the cytoplasm. It catalyses the reaction L-aspartate + H(+) = beta-alanine + CO2. The protein operates within cofactor biosynthesis; (R)-pantothenate biosynthesis; beta-alanine from L-aspartate: step 1/1. Its function is as follows. Catalyzes the pyruvoyl-dependent decarboxylation of aspartate to produce beta-alanine. The polypeptide is Aspartate 1-decarboxylase (Rhodococcus opacus (strain B4)).